A 595-amino-acid chain; its full sequence is Putative terpenoid synthase 16 (595 aa).

Aspartate 349, aspartate 353, asparagine 494, and aspartate 502 together coordinate Mg(2+). Positions 349–353 match the DDXXD motif motif; the sequence is DDTCD.

The protein belongs to the terpene synthase family. Tpsa subfamily. Mg(2+) serves as cofactor. The cofactor is Mn(2+).

The protein resides in the cytoplasm. The protein operates within secondary metabolite biosynthesis; terpenoid biosynthesis. The sequence is that of Putative terpenoid synthase 16 (TPS16) from Arabidopsis thaliana (Mouse-ear cress).